We begin with the raw amino-acid sequence, 162 residues long: Corticoliberin (162 aa).

A signal peptide spans 1 to 24; sequence MKLNFLVTTVALLVAFPPPYECRA. Residues 25-119 constitute a propeptide that is removed on maturation; it reads IEGSSNQPAT…ALDSVERERR (95 aa). At Phe-160 the chain carries Phenylalanine amide.

Belongs to the sauvagine/corticotropin-releasing factor/urotensin I family.

It localises to the secreted. In terms of biological role, this hormone from hypothalamus regulates the release of corticotropin from pituitary gland. This chain is Corticoliberin (crh), found in Carassius auratus (Goldfish).